A 460-amino-acid chain; its full sequence is Lipase member H-A (460 aa).

Positions 1–26 (MLLSFYFNGLLLVGCLLSWGRSDTEG) are cleaved as a signal peptide. 2 N-linked (GlcNAc...) asparagine glycosylation sites follow: Asn67 and Asn75. The Nucleophile role is filled by Ser163. An N-linked (GlcNAc...) asparagine glycan is attached at Asn177. Catalysis depends on Asp187, which acts as the Charge relay system. Cys242 and Cys255 form a disulfide bridge. His257 functions as the Charge relay system in the catalytic mechanism. Intrachain disulfides connect Cys279/Cys290 and Cys293/Cys301. N-linked (GlcNAc...) asparagine glycosylation is present at Asn289. The N-linked (GlcNAc...) asparagine glycan is linked to Asn366. The cysteines at positions 436 and 455 are disulfide-linked.

The protein belongs to the AB hydrolase superfamily. Lipase family.

It is found in the secreted. The protein localises to the cell membrane. The enzyme catalyses 1-hexadecanoyl-2-(9Z-octadecenoyl)-sn-glycero-3-phosphate + H2O = 2-(9Z-octadecenoyl)-sn-glycero-3-phosphate + hexadecanoate + H(+). Its function is as follows. Hydrolyzes specifically phosphatidic acid (PA) to produce 2-acyl lysophosphatidic acid (LPA; a potent bioactive lipid mediator) and fatty acid. Does not hydrolyze other phospholipids, like phosphatidylserine (PS), phosphatidylcholine (PC) and phosphatidylethanolamine (PE) or triacylglycerol (TG). The protein is Lipase member H-A (liph-a) of Xenopus laevis (African clawed frog).